A 181-amino-acid polypeptide reads, in one-letter code: Ribulose bisphosphate carboxylase small subunit, chloroplastic 2 (181 aa).

Residues 1–54 constitute a chloroplast transit peptide; sequence MASSMLSSAAVVTSPAQATMVAPFTGLKSSAAFPVTRKANNDITSIASNGGRVS.

It belongs to the RuBisCO small chain family. Heterohexadecamer of 8 large and 8 small subunits.

It is found in the plastid. The protein localises to the chloroplast. In terms of biological role, ruBisCO catalyzes two reactions: the carboxylation of D-ribulose 1,5-bisphosphate, the primary event in carbon dioxide fixation, as well as the oxidative fragmentation of the pentose substrate. Both reactions occur simultaneously and in competition at the same active site. Although the small subunit is not catalytic it is essential for maximal activity. The polypeptide is Ribulose bisphosphate carboxylase small subunit, chloroplastic 2 (Brassica napus (Rape)).